A 123-amino-acid polypeptide reads, in one-letter code: Ribonuclease P protein component (123 aa).

The protein belongs to the RnpA family. In terms of assembly, consists of a catalytic RNA component (M1 or rnpB) and a protein subunit.

It carries out the reaction Endonucleolytic cleavage of RNA, removing 5'-extranucleotides from tRNA precursor.. In terms of biological role, RNaseP catalyzes the removal of the 5'-leader sequence from pre-tRNA to produce the mature 5'-terminus. It can also cleave other RNA substrates such as 4.5S RNA. The protein component plays an auxiliary but essential role in vivo by binding to the 5'-leader sequence and broadening the substrate specificity of the ribozyme. The chain is Ribonuclease P protein component from Streptomyces avermitilis (strain ATCC 31267 / DSM 46492 / JCM 5070 / NBRC 14893 / NCIMB 12804 / NRRL 8165 / MA-4680).